A 754-amino-acid chain; its full sequence is 1,4-alpha-glucan branching enzyme GlgB (754 aa).

Residue Asp431 is the Nucleophile of the active site. The Proton donor role is filled by Glu484.

The protein belongs to the glycosyl hydrolase 13 family. GlgB subfamily. Monomer.

It carries out the reaction Transfers a segment of a (1-&gt;4)-alpha-D-glucan chain to a primary hydroxy group in a similar glucan chain.. Its pathway is glycan biosynthesis; glycogen biosynthesis. In terms of biological role, catalyzes the formation of the alpha-1,6-glucosidic linkages in glycogen by scission of a 1,4-alpha-linked oligosaccharide from growing alpha-1,4-glucan chains and the subsequent attachment of the oligosaccharide to the alpha-1,6 position. The sequence is that of 1,4-alpha-glucan branching enzyme GlgB from Prochlorococcus marinus (strain MIT 9215).